Reading from the N-terminus, the 263-residue chain is Trans-aconitate 2-methyltransferase (263 aa).

The protein belongs to the methyltransferase superfamily. Tam family.

It is found in the cytoplasm. The catalysed reaction is trans-aconitate + S-adenosyl-L-methionine = (E)-3-(methoxycarbonyl)pent-2-enedioate + S-adenosyl-L-homocysteine. Catalyzes the S-adenosylmethionine monomethyl esterification of trans-aconitate. In Mycobacterium ulcerans (strain Agy99), this protein is Trans-aconitate 2-methyltransferase.